Here is an 863-residue protein sequence, read N- to C-terminus: Eukaryotic translation initiation factor 3 subunit C (863 aa).

Residues 1–92 (MSRFFRGGDD…VKSAKDKRFD (92 aa)) are disordered. A compositionally biased stretch (acidic residues) spans 16–53 (SSDEEELYSTSEEEEEEDQDQEESSEEEDEEESSDEDE). Basic and acidic residues predominate over residues 79–92 (GATKVKSAKDKRFD). Positions 604 to 778 (FHMHINLELL…KTVIFRKGVE (175 aa)) constitute a PCI domain. The disordered stretch occupies residues 808–863 (TQGSANAFSRKDGRQGGQRGGGQRSGRGGARAGGNAQRQAGGTQFTGGALGAAVRG). Positions 822–839 (QGGQRGGGQRSGRGGARA) are enriched in gly residues. A compositionally biased stretch (low complexity) spans 840–850 (GGNAQRQAGGT).

Belongs to the eIF-3 subunit C family. As to quaternary structure, component of the eukaryotic translation initiation factor 3 (eIF-3) complex.

It localises to the cytoplasm. In terms of biological role, component of the eukaryotic translation initiation factor 3 (eIF-3) complex, which is involved in protein synthesis of a specialized repertoire of mRNAs and, together with other initiation factors, stimulates binding of mRNA and methionyl-tRNAi to the 40S ribosome. The eIF-3 complex specifically targets and initiates translation of a subset of mRNAs involved in cell proliferation. The protein is Eukaryotic translation initiation factor 3 subunit C of Chaetomium globosum (strain ATCC 6205 / CBS 148.51 / DSM 1962 / NBRC 6347 / NRRL 1970) (Soil fungus).